The sequence spans 681 residues: Heat shock 70 kDa protein (681 aa).

Residues 655 to 665 (NFPGGMPGAGM) show a composition bias toward gly residues. Positions 655–681 (NFPGGMPGAGMPGNAPAGSGPTVEEVD) are disordered. Low complexity predominate over residues 666–675 (PGNAPAGSGP).

It belongs to the heat shock protein 70 family.

The protein is Heat shock 70 kDa protein of Plasmodium falciparum.